A 585-amino-acid chain; its full sequence is Probable monoterpene synthase MTS1, chloroplastic (585 aa).

The disordered stretch occupies residues 1–29 (MSLSGVPLSAGLAPSPSNKPTNGKGQNIV). The N-terminal 31 residues, 1 to 31 (MSLSGVPLSAGLAPSPSNKPTNGKGQNIVRR), are a transit peptide targeting the chloroplast. The segment covering 15 to 25 (SPSNKPTNGKG) has biased composition (polar residues). Positions 298, 335, 339, 476, and 479 each coordinate (2E)-geranyl diphosphate. The Mg(2+) site is built by aspartate 335 and aspartate 339. The short motif at 335–339 (DDIYD) is the DDXXD motif element. Positions 479, 483, and 487 each coordinate Mg(2+).

This sequence belongs to the terpene synthase family. Tpsb subfamily. Requires Mg(2+) as cofactor. The cofactor is Mn(2+). In terms of tissue distribution, expressed in trichomes. Detected in flowers, but not in leaves.

It localises to the plastid. Its subcellular location is the chloroplast. In Humulus lupulus (European hop), this protein is Probable monoterpene synthase MTS1, chloroplastic.